The primary structure comprises 302 residues: Porphobilinogen deaminase (302 aa).

At Cys234 the chain carries S-(dipyrrolylmethanemethyl)cysteine.

It belongs to the HMBS family. As to quaternary structure, monomer. Dipyrromethane is required as a cofactor.

The enzyme catalyses 4 porphobilinogen + H2O = hydroxymethylbilane + 4 NH4(+). It functions in the pathway porphyrin-containing compound metabolism; protoporphyrin-IX biosynthesis; coproporphyrinogen-III from 5-aminolevulinate: step 2/4. Functionally, tetrapolymerization of the monopyrrole PBG into the hydroxymethylbilane pre-uroporphyrinogen in several discrete steps. In Corynebacterium glutamicum (strain R), this protein is Porphobilinogen deaminase.